Consider the following 392-residue polypeptide: MLNAEQRAIIKATVPLLESGGEALTTHFYKMMLSEYPEVRPLFNQAHQASGDQPRALANGVLMYARHIDQLEQLGGLVGQIINKHVALQILPEHYPIVGSCLLRAIEEVLGKDIATPAVIDAWGAAYGQLADILIGAEENLYKEKEEAEGGWRGTREFRLVRREQESSEIVSFYFAPVDGMPVLKAEPGQYIGLKLDIDGAEQRRNYSLSALCDGKEYRISVKREAGGKVSNYLHDELKVGDTLQLFPPAGDFTLAASDKPLVLISGGVGITPTLAMLQAALQTRREVHFIHCARNGAVHAFRDWIDGLAARHPQLKRFYCYAEPEGGAAADAVGLLSEDLLAEWLPQERDVDAYFLGPKGFMAAVKRQLKGLGVPEQQSRYEFFGPAAALE.

The region spanning 1 to 139 is the Globin domain; that stretch reads MLNAEQRAII…LADILIGAEE (139 aa). Histidine 85 serves as a coordination point for heme b. Residues tyrosine 95 and glutamate 138 each act as charge relay system in the active site. The segment at 150–392 is reductase; sequence GGWRGTREFR…EFFGPAAALE (243 aa). An FAD-binding FR-type domain is found at 153–256; sequence RGTREFRLVR…FPPAGDFTLA (104 aa). FAD is bound by residues tyrosine 191 and 205-208; that span reads RNYS. 268–273 contributes to the NADP(+) binding site; it reads GVGITP. 384-387 lines the FAD pocket; that stretch reads FFGP.

This sequence belongs to the globin family. Two-domain flavohemoproteins subfamily. The protein in the C-terminal section; belongs to the flavoprotein pyridine nucleotide cytochrome reductase family. Heme b is required as a cofactor. FAD serves as cofactor.

It catalyses the reaction 2 nitric oxide + NADPH + 2 O2 = 2 nitrate + NADP(+) + H(+). It carries out the reaction 2 nitric oxide + NADH + 2 O2 = 2 nitrate + NAD(+) + H(+). Functionally, is involved in NO detoxification in an aerobic process, termed nitric oxide dioxygenase (NOD) reaction that utilizes O(2) and NAD(P)H to convert NO to nitrate, which protects the bacterium from various noxious nitrogen compounds. Therefore, plays a central role in the inducible response to nitrosative stress. The polypeptide is Flavohemoprotein (Pseudomonas putida (strain ATCC 47054 / DSM 6125 / CFBP 8728 / NCIMB 11950 / KT2440)).